Here is an 82-residue protein sequence, read N- to C-terminus: Penaeidin-3g (82 aa).

The signal sequence occupies residues 1–19; it reads MRLVVCLVFLASFALVCQG. Gln20 carries the pyrrolidone carboxylic acid modification. 3 disulfides stabilise this stretch: Cys51–Cys66, Cys55–Cys73, and Cys67–Cys74. At Ser81 the chain carries Serine amide.

The protein belongs to the penaeidin family.

It localises to the cytoplasmic granule. Antibacterial and antifungal activity. Presents chitin-binding activity. This Penaeus vannamei (Whiteleg shrimp) protein is Penaeidin-3g.